A 61-amino-acid chain; its full sequence is Small ribosomal subunit protein uS14 (61 aa).

4 residues coordinate Zn(2+): cysteine 24, cysteine 27, cysteine 40, and cysteine 43.

This sequence belongs to the universal ribosomal protein uS14 family. Zinc-binding uS14 subfamily. As to quaternary structure, part of the 30S ribosomal subunit. Contacts proteins S3 and S10. Zn(2+) is required as a cofactor.

In terms of biological role, binds 16S rRNA, required for the assembly of 30S particles and may also be responsible for determining the conformation of the 16S rRNA at the A site. In Thermobifida fusca (strain YX), this protein is Small ribosomal subunit protein uS14.